The following is a 204-amino-acid chain: Arginine exporter protein ArgO (204 aa).

The next 6 helical transmembrane spans lie at 1-21, 37-57, 67-87, 111-131, 147-167, and 179-199; these read MFAV…PLGP, LMVA…GIFG, LLLG…GWGA, IIAT…DTFV, WFAL…ALLA, and VQRV…LQLA.

Belongs to the LysE/ArgO transporter (TC 2.A.75) family.

The protein localises to the cell inner membrane. The enzyme catalyses L-arginine(in) = L-arginine(out). Its function is as follows. Involved in the export of arginine. Important to control the intracellular level of arginine and the correct balance between arginine and lysine. This chain is Arginine exporter protein ArgO, found in Pectobacterium carotovorum subsp. carotovorum (strain PC1).